The following is a 383-amino-acid chain: Succinate--CoA ligase [ADP-forming] subunit beta (383 aa).

An ATP-grasp domain is found at 9–236 (KELLGRFGLR…VEAADPQEHR (228 aa)). ATP is bound by residues Lys-45, 52-54 (GRG), Glu-91, Ala-94, and Glu-99. The Mg(2+) site is built by Asn-191 and Asp-205. Residues Asn-256 and 313–315 (GIT) contribute to the substrate site.

The protein belongs to the succinate/malate CoA ligase beta subunit family. In terms of assembly, heterotetramer of two alpha and two beta subunits. Mg(2+) is required as a cofactor.

It carries out the reaction succinate + ATP + CoA = succinyl-CoA + ADP + phosphate. The enzyme catalyses GTP + succinate + CoA = succinyl-CoA + GDP + phosphate. The protein operates within carbohydrate metabolism; tricarboxylic acid cycle; succinate from succinyl-CoA (ligase route): step 1/1. Its function is as follows. Succinyl-CoA synthetase functions in the citric acid cycle (TCA), coupling the hydrolysis of succinyl-CoA to the synthesis of either ATP or GTP and thus represents the only step of substrate-level phosphorylation in the TCA. The beta subunit provides nucleotide specificity of the enzyme and binds the substrate succinate, while the binding sites for coenzyme A and phosphate are found in the alpha subunit. The protein is Succinate--CoA ligase [ADP-forming] subunit beta of Rubrobacter xylanophilus (strain DSM 9941 / JCM 11954 / NBRC 16129 / PRD-1).